Here is a 236-residue protein sequence, read N- to C-terminus: Lectin CPL (236 aa).

Residues Glu-8 and Asp-10 each contribute to the Mn(2+) site. Residues Asp-10, Tyr-12, Asn-14, and Asp-19 each coordinate Ca(2+). Asn-14 contacts a carbohydrate. 2 residues coordinate Mn(2+): Asp-19 and His-24. A carbohydrate contacts are provided by residues 99 to 100 (VY), Asp-207, and Arg-227.

It belongs to the leguminous lectin family. Homotetramer; dimer of dimers. Concanavalin A-like lectins of the Diocleinae subtribe undergo proteolytic processing referred to as circular permutation. The propeptide is split into an N-terminal and a C-terminal part, the gamma and beta chain, respectively. These are then religated in beta-gamma order to form the mature alpha chain. The beta and gamma chains can often be detected in cell extracts. Residues 1-118 of the mature chain, as displayed here, probably constitute the beta chain in the propeptide, residues 119-236 the gamma chain.

In terms of biological role, D-mannose/D-glucose-binding lectin that also binds derivative alpha-methyl-D-mannppyranoside. Has hemagglutinating activity towards rabbit erythrocytes. The polypeptide is Lectin CPL (Bionia pedicellata (Camptosema pedicellatum)).